Reading from the N-terminus, the 357-residue chain is Actin, cytoplasmic (357 aa).

Belongs to the actin family. Post-translationally, met-1 may be removed after translation.

Its subcellular location is the cytoplasm. The protein resides in the cytoskeleton. It carries out the reaction ATP + H2O = ADP + phosphate + H(+). In terms of biological role, actins are highly conserved proteins that are involved in various types of cell motility and are ubiquitously expressed in all eukaryotic cells. This Oxytricha fallax protein is Actin, cytoplasmic.